The following is a 205-amino-acid chain: COP9 signalosome complex subunit 7 (205 aa).

The PCI domain occupies 1 to 135 (MEEKISQAID…QTLHVSWALE (135 aa)). Residue Ser183 is modified to Phosphoserine.

Belongs to the CSN7/EIF3M family. CSN7 subfamily. In terms of assembly, component of the COP9 signalosome (CSN) complex.

Its function is as follows. Component of the COP9 signalosome (CSN) complex that acts as an regulator of the ubiquitin (Ubl) conjugation pathway by mediating the deneddylation of the cullin subunit of SCF-type E3 ubiquitin-protein ligase complexes. The chain is COP9 signalosome complex subunit 7 (csn71) from Schizosaccharomyces pombe (strain 972 / ATCC 24843) (Fission yeast).